The primary structure comprises 76 residues: DNA-directed RNA polymerase subunit epsilon (76 aa).

This sequence belongs to the RNA polymerase subunit epsilon family. In terms of assembly, RNAP is composed of a core of 2 alpha, a beta and a beta' subunit. The core is associated with a delta subunit, and at least one of epsilon or omega. When a sigma factor is associated with the core the holoenzyme is formed, which can initiate transcription.

It catalyses the reaction RNA(n) + a ribonucleoside 5'-triphosphate = RNA(n+1) + diphosphate. Its function is as follows. A non-essential component of RNA polymerase (RNAP). The chain is DNA-directed RNA polymerase subunit epsilon from Streptococcus mutans serotype c (strain ATCC 700610 / UA159).